Consider the following 273-residue polypeptide: Light-independent protochlorophyllide reductase iron-sulfur ATP-binding protein (273 aa).

ATP is bound by residues 12–17 and lysine 41; that span reads GIGKST. Serine 16 lines the Mg(2+) pocket. Residues cysteine 97 and cysteine 131 each contribute to the [4Fe-4S] cluster site. Position 182–183 (182–183) interacts with ATP; it reads NR.

Belongs to the NifH/BchL/ChlL family. In terms of assembly, homodimer. Protochlorophyllide reductase is composed of three subunits; BchL, BchN and BchB. Requires [4Fe-4S] cluster as cofactor.

It carries out the reaction chlorophyllide a + oxidized 2[4Fe-4S]-[ferredoxin] + 2 ADP + 2 phosphate = protochlorophyllide a + reduced 2[4Fe-4S]-[ferredoxin] + 2 ATP + 2 H2O. It functions in the pathway porphyrin-containing compound metabolism; bacteriochlorophyll biosynthesis (light-independent). Its function is as follows. Component of the dark-operative protochlorophyllide reductase (DPOR) that uses Mg-ATP and reduced ferredoxin to reduce ring D of protochlorophyllide (Pchlide) to form chlorophyllide a (Chlide). This reaction is light-independent. The L component serves as a unique electron donor to the NB-component of the complex, and binds Mg-ATP. This Chloroflexus aggregans (strain MD-66 / DSM 9485) protein is Light-independent protochlorophyllide reductase iron-sulfur ATP-binding protein.